Here is a 272-residue protein sequence, read N- to C-terminus: SWIRM domain-containing protein laf2 (272 aa).

Residues His-86–Gly-148 are disordered. Low complexity-rich tracts occupy residues Ser-95–Gly-120 and Arg-127–Ile-136. 2 positions are modified to phosphoserine: Ser-130 and Ser-132. Position 135 is a phosphothreonine (Thr-135). An SWIRM domain is found at Leu-182–Asp-272.

In terms of assembly, component of the RPD3C(L) complex.

It is found in the nucleus. In terms of biological role, component of the RPD3C(L) histone deacetylase complex (HDAC) responsible for the deacetylation of lysine residues on the N-terminal part of the core histones (H2A, H2B, H3 and H4). Histone deacetylation gives a tag for epigenetic repression and plays an important role in transcriptional regulation, cell cycle progression and developmental events. In Schizosaccharomyces pombe (strain 972 / ATCC 24843) (Fission yeast), this protein is SWIRM domain-containing protein laf2 (laf2).